Here is a 361-residue protein sequence, read N- to C-terminus: Serpentine receptor class X 45 (361 aa).

The next 7 helical transmembrane spans lie at 20–40 (LLIFFTSFIGFACNTFIAFYI), 58–78 (AAGDAVFVLVWAFYFAPVLFF), 92–112 (FAQLCLICYDISIYTHLVISL), 133–153 (TTFLICSIIFVSFGFSWFLVI), 176–196 (MINVYYAEFFRGLIVISMFAI), 242–262 (LLYVIELVTYFYISLRFPVPL), and 278–298 (LLTTYAWILVHALDGVITLIF). N-linked (GlcNAc...) asparagine glycosylation occurs at Asn317.

It belongs to the G-protein coupled receptor 1 family.

It localises to the cell membrane. This chain is Serpentine receptor class X 45 (srx-45), found in Caenorhabditis elegans.